Reading from the N-terminus, the 131-residue chain is Large ribosomal subunit protein eL32 (131 aa).

The interval 39–77 (LGEKWRRPKGRHSKMRRKLKSKPKMPNPGYGSPKKVRGL) is disordered. Positions 44 to 61 (RRPKGRHSKMRRKLKSKP) are enriched in basic residues.

It belongs to the eukaryotic ribosomal protein eL32 family.

This chain is Large ribosomal subunit protein eL32 (rpl32), found in Methanopyrus kandleri (strain AV19 / DSM 6324 / JCM 9639 / NBRC 100938).